The sequence spans 506 residues: GMP synthase [glutamine-hydrolyzing] (506 aa).

In terms of domain architecture, Glutamine amidotransferase type-1 spans 4–192 (KLIILDFGSQ…FLDICGMKRD (189 aa)). Cysteine 79 functions as the Nucleophile in the catalytic mechanism. Residues histidine 167 and glutamate 169 contribute to the active site. Residues 193–381 (WTPASFIEAT…LGMMPHLIHR (189 aa)) enclose the GMPS ATP-PPase domain. Position 220–226 (220–226 (SGGVDSS)) interacts with ATP.

Homodimer.

It carries out the reaction XMP + L-glutamine + ATP + H2O = GMP + L-glutamate + AMP + diphosphate + 2 H(+). It participates in purine metabolism; GMP biosynthesis; GMP from XMP (L-Gln route): step 1/1. In terms of biological role, catalyzes the synthesis of GMP from XMP. The chain is GMP synthase [glutamine-hydrolyzing] from Porphyromonas gingivalis (strain ATCC 33277 / DSM 20709 / CIP 103683 / JCM 12257 / NCTC 11834 / 2561).